Here is a 363-residue protein sequence, read N- to C-terminus: Chorismate synthase (363 aa).

NADP(+) contacts are provided by R48 and R54. Residues 125–127 (RSS), 237–238 (NA), G277, 292–296 (KPTSS), and R318 contribute to the FMN site.

Belongs to the chorismate synthase family. As to quaternary structure, homotetramer. FMNH2 serves as cofactor.

The enzyme catalyses 5-O-(1-carboxyvinyl)-3-phosphoshikimate = chorismate + phosphate. The protein operates within metabolic intermediate biosynthesis; chorismate biosynthesis; chorismate from D-erythrose 4-phosphate and phosphoenolpyruvate: step 7/7. Its function is as follows. Catalyzes the anti-1,4-elimination of the C-3 phosphate and the C-6 proR hydrogen from 5-enolpyruvylshikimate-3-phosphate (EPSP) to yield chorismate, which is the branch point compound that serves as the starting substrate for the three terminal pathways of aromatic amino acid biosynthesis. This reaction introduces a second double bond into the aromatic ring system. This is Chorismate synthase from Pseudomonas paraeruginosa (strain DSM 24068 / PA7) (Pseudomonas aeruginosa (strain PA7)).